Consider the following 528-residue polypeptide: Inositol-3-phosphate synthase (528 aa).

Residues glycine 66, glycine 67, asparagine 68, asparagine 69, aspartate 140, glutamine 187, arginine 190, threonine 228, alanine 229, asparagine 230, threonine 231, glycine 279, aspartate 304, serine 307, asparagine 338, asparagine 339, aspartate 340, lysine 353, glycine 392, aspartate 393, aspartate 421, and serine 422 each coordinate NAD(+).

It belongs to the myo-inositol 1-phosphate synthase family. Requires NAD(+) as cofactor.

It is found in the cytoplasm. It localises to the cytosol. The enzyme catalyses D-glucose 6-phosphate = 1D-myo-inositol 3-phosphate. It functions in the pathway polyol metabolism; myo-inositol biosynthesis; myo-inositol from D-glucose 6-phosphate: step 1/2. Its activity is regulated as follows. Activated by ammonium ions. Functionally, key enzyme in myo-inositol biosynthesis pathway that catalyzes the conversion of glucose 6-phosphate to 1-myo-inositol 1-phosphate in a NAD-dependent manner. Rate-limiting enzyme in the synthesis of all inositol-containing compounds. De novo-synthesized myo-inositol is essential for incorporation into GPI (glycosylphosphatidylinositol) glycolipids in the bloodstream form. This Trypanosoma brucei brucei protein is Inositol-3-phosphate synthase.